The primary structure comprises 92 residues: UPF0125 protein NMA1005 (92 aa).

This sequence belongs to the UPF0125 (RnfH) family.

The protein is UPF0125 protein NMA1005 of Neisseria meningitidis serogroup A / serotype 4A (strain DSM 15465 / Z2491).